A 336-amino-acid polypeptide reads, in one-letter code: Fructose-1,6-bisphosphatase class 1 (336 aa).

Mg(2+) is bound by residues E90, D112, L114, and D115. Residues 115-118 (DGSS), N211, and K277 contribute to the substrate site. A Mg(2+)-binding site is contributed by E283.

It belongs to the FBPase class 1 family. As to quaternary structure, homotetramer. Requires Mg(2+) as cofactor.

The protein localises to the cytoplasm. The catalysed reaction is beta-D-fructose 1,6-bisphosphate + H2O = beta-D-fructose 6-phosphate + phosphate. It functions in the pathway carbohydrate biosynthesis; gluconeogenesis. This chain is Fructose-1,6-bisphosphatase class 1, found in Pseudomonas paraeruginosa (strain DSM 24068 / PA7) (Pseudomonas aeruginosa (strain PA7)).